The primary structure comprises 427 residues: MTTGRLSMAEILEIFTATGQHPLKFTAYDGSTAGQDDATLGLDLRTPRGATYLATAPGELGLARAYVSGDLQAHGVHPGDPYELLKTLTERVDFKRPSARVLANVVRSIGVEHILPIAPPPQEARPRWRRMANGLLHSKTRDAEAIHHHYDVSNNFYEWVLGPSMTYTCAVFPNAEASLEQAQENKYRLIFEKLRLEPGDRLLDVGCGWGGMVRYAARRGVRVIGATLSAEQAKWGQKAVEDEGLSDLAQVRHSDYRDVAETGFDAVSSIGLTEHIGVKNYPFYFGFLKSKLRTGGLLLNHCITRHDNRSTSFAGGFTDRYVFPDGELTGSGRITTEIQQVGLEVLHEENFRHHYAMTLRDWCGNLVEHWDDAVAEVGLPTAKVWGLYMAASRVAFERNNLQLHHVLATKVDPRGDDSLPLRPWWQP.

Residues 167–168 (YT), 202–210 (LLDVGCGWG), and 227–232 (TLSAEQ) contribute to the S-adenosyl-L-methionine site.

The protein belongs to the CFA/CMAS family.

May be a S-adenosylmethionine-dependent methyltransferase involved in fatty acid metabolism. This chain is Probable fatty acid methyltransferase Rv3720, found in Mycobacterium tuberculosis (strain ATCC 25618 / H37Rv).